The chain runs to 153 residues: Large ribosomal subunit protein uL22 (153 aa).

The interval 125–153 (EPKEARQARKKAKSGRPAAAAKSETEKGA) is disordered.

It belongs to the universal ribosomal protein uL22 family. In terms of assembly, part of the 50S ribosomal subunit.

This protein binds specifically to 23S rRNA; its binding is stimulated by other ribosomal proteins, e.g. L4, L17, and L20. It is important during the early stages of 50S assembly. It makes multiple contacts with different domains of the 23S rRNA in the assembled 50S subunit and ribosome. Functionally, the globular domain of the protein is located near the polypeptide exit tunnel on the outside of the subunit, while an extended beta-hairpin is found that lines the wall of the exit tunnel in the center of the 70S ribosome. The polypeptide is Large ribosomal subunit protein uL22 (Cutibacterium acnes (strain DSM 16379 / KPA171202) (Propionibacterium acnes)).